A 404-amino-acid polypeptide reads, in one-letter code: uncharacterized protein (404 aa).

The segment covering 262–278 (VSTGDTSPCGTEDSSPA) has biased composition (polar residues). 2 disordered regions span residues 262–307 (VSTG…SPSL) and 319–340 (MKKS…SGAD). 3 positions are modified to phosphoserine: Ser-268, Ser-276, and Ser-279. 2 positions are modified to phosphothreonine: Thr-290 and Thr-293. A phosphoserine mark is found at Ser-304, Ser-306, Ser-324, Ser-358, and Ser-362. Positions 319-336 (MKKSHSANDSEEFFREDD) are enriched in basic and acidic residues.

This is an uncharacterized protein from Mus musculus (Mouse).